Here is a 268-residue protein sequence, read N- to C-terminus: MKFAVIGNPISHSLSPVMHRANFNSLGLDDTYEALNIPIEDFHLIKEIISKKELDGFNITIPHKERIIPYLDHVDEQAINAGAVNTVLIKDDKWIGYNTDGIGYVKGLHSVYPDLENAYILILGAGGASKGIAYELAKFVKPKLTVANRTMARFESWNLNINQISLADAEKYLAEFDIVINTTPAGMAGNNESIINLKHLSPNTLMSDIVYIPYKTPILEEAERKGNHIYNGLDMFVYQGAESFKIWTNKDADINSMKTAVLQQLKGE.

Shikimate contacts are provided by residues S13 to S15 and T60. K64 (proton acceptor) is an active-site residue. NADP(+) is bound at residue E76. Shikimate-binding residues include N85 and D100. NADP(+)-binding positions include G124–A128, N148–R153, and I209. Residue Y211 coordinates shikimate. NADP(+) is bound at residue G232.

Belongs to the shikimate dehydrogenase family. As to quaternary structure, homodimer.

It carries out the reaction shikimate + NADP(+) = 3-dehydroshikimate + NADPH + H(+). It participates in metabolic intermediate biosynthesis; chorismate biosynthesis; chorismate from D-erythrose 4-phosphate and phosphoenolpyruvate: step 4/7. In terms of biological role, involved in the biosynthesis of the chorismate, which leads to the biosynthesis of aromatic amino acids. Catalyzes the reversible NADPH linked reduction of 3-dehydroshikimate (DHSA) to yield shikimate (SA). This chain is Shikimate dehydrogenase (NADP(+)), found in Staphylococcus aureus (strain MSSA476).